We begin with the raw amino-acid sequence, 286 residues long: Beta-lactamase SHV-34 (286 aa).

The signal sequence occupies residues 1 to 21; the sequence is MRYFRLCIISLLATLPLAVHA. Catalysis depends on serine 66, which acts as the Acyl-ester intermediate. Cysteine 73 and cysteine 119 are oxidised to a cystine. The active-site Proton acceptor is the glutamate 164. 230 to 232 contributes to the substrate binding site; the sequence is KTG.

It belongs to the class-A beta-lactamase family.

The enzyme catalyses a beta-lactam + H2O = a substituted beta-amino acid. Functionally, hydrolyzes ceftazidime and cefotaxime. This chain is Beta-lactamase SHV-34 (bla), found in Escherichia coli.